We begin with the raw amino-acid sequence, 532 residues long: BTB/POZ domain-containing protein 3 (532 aa).

Positions 23 to 54 are disordered; that stretch reads KNRSKKSSKKTNTGGGGGGSSSSSSSSSNSKL. Low complexity predominate over residues 43-53; it reads SSSSSSSSNSK. Residues 130-200 form the BTB domain; that stretch reads ADVHFVVGPP…IYCDEIDLAA (71 aa). One can recognise a BACK domain in the interval 245-310; sequence FEEPDLTQRC…NWAEVECQRQ (66 aa).

Expressed in visual cortex. Expressed in visual cortex layer IV neurons.

It is found in the cytoplasm. The protein resides in the cytosol. It localises to the nucleus. Its function is as follows. Acts as a key regulator of dendritic field orientation during development of sensory cortex. Also directs dendrites toward active axon terminals when ectopically expressed. The chain is BTB/POZ domain-containing protein 3 (BTBD3) from Mustela putorius furo (European domestic ferret).